The following is an 825-amino-acid chain: Phenylalanine--tRNA ligase beta subunit (825 aa).

The tRNA-binding domain maps to 39–154 (RSWAEGVVLG…KAHPLGSDAR (116 aa)). One can recognise a B5 domain in the interval 411–506 (PLERTLKLRL…RLYGYDRFSE (96 aa)). Positions 484, 490, 493, and 494 each coordinate Mg(2+). The FDX-ACB domain maps to 731-824 (SPFPASDRDI…LEKHFPVTLR (94 aa)).

This sequence belongs to the phenylalanyl-tRNA synthetase beta subunit family. Type 1 subfamily. As to quaternary structure, tetramer of two alpha and two beta subunits. Mg(2+) serves as cofactor.

The protein resides in the cytoplasm. The enzyme catalyses tRNA(Phe) + L-phenylalanine + ATP = L-phenylalanyl-tRNA(Phe) + AMP + diphosphate + H(+). This is Phenylalanine--tRNA ligase beta subunit from Synechococcus sp. (strain JA-3-3Ab) (Cyanobacteria bacterium Yellowstone A-Prime).